The sequence spans 232 residues: Orotidine 5'-phosphate decarboxylase (232 aa).

Substrate contacts are provided by residues Asp-16, Lys-38, 65–74 (DLKLHDIGNT), Thr-119, Arg-180, Gln-189, Gly-209, and Arg-210. Residue Lys-67 is the Proton donor of the active site.

It belongs to the OMP decarboxylase family. Type 1 subfamily. In terms of assembly, homodimer.

It catalyses the reaction orotidine 5'-phosphate + H(+) = UMP + CO2. The protein operates within pyrimidine metabolism; UMP biosynthesis via de novo pathway; UMP from orotate: step 2/2. Its function is as follows. Catalyzes the decarboxylation of orotidine 5'-monophosphate (OMP) to uridine 5'-monophosphate (UMP). In Methylorubrum extorquens (strain PA1) (Methylobacterium extorquens), this protein is Orotidine 5'-phosphate decarboxylase.